The following is an 851-amino-acid chain: Protein NUD1 (851 aa).

Disordered regions lie at residues M1–S31 and L216–S352. Residues A8–S21 show a composition bias toward polar residues. Low complexity-rich tracts occupy residues N223–K246 and S260–S278. Residues N291–H304 are compositionally biased toward polar residues. Over residues S320–S333 the composition is skewed to low complexity. A Glycyl lysine isopeptide (Lys-Gly) (interchain with G-Cter in ubiquitin) cross-link involves residue K357. Phosphothreonine occurs at positions 388 and 392. A phosphoserine mark is found at S417 and S419. LRR repeat units follow at residues D544–H566, H567–R588, M589–I609, T621–P642, and R643–E664.

In terms of assembly, interacts directly with MPC54, CNM67, SPO21/MPC70, ADY3 and ADY4. Probable component of a spindle pole boby (SPB) complex composed of ADY3, SSP1, DON1, MPC54, SPO21/MPC70, NUD1 and CNM67. Post-translationally, phosphorylated from S/G2 phase until the end of mitosis.

Its subcellular location is the cytoplasm. The protein localises to the cytoskeleton. It localises to the microtubule organizing center. It is found in the spindle pole body. The protein resides in the nucleus envelope. Its function is as follows. Involved in astral microtubule organization by binding SCP72 to the outer plaque in a cell-cycle dependent manner. Required for the mitotic exit by facilitating the binding of TEMP1 to CDC15. Also involved in the pathway that organizes the shaping and sizing of the prospore membrane (PSM) during sporulation. The chain is Protein NUD1 (NUD1) from Saccharomyces cerevisiae (strain ATCC 204508 / S288c) (Baker's yeast).